We begin with the raw amino-acid sequence, 464 residues long: ATP synthase subunit beta 1 (464 aa).

153-160 contacts ATP; it reads GGAGVGKT.

The protein belongs to the ATPase alpha/beta chains family. F-type ATPases have 2 components, CF(1) - the catalytic core - and CF(0) - the membrane proton channel. CF(1) has five subunits: alpha(3), beta(3), gamma(1), delta(1), epsilon(1). CF(0) has three main subunits: a(1), b(2) and c(9-12). The alpha and beta chains form an alternating ring which encloses part of the gamma chain. CF(1) is attached to CF(0) by a central stalk formed by the gamma and epsilon chains, while a peripheral stalk is formed by the delta and b chains.

The protein localises to the cell inner membrane. It carries out the reaction ATP + H2O + 4 H(+)(in) = ADP + phosphate + 5 H(+)(out). Its function is as follows. Produces ATP from ADP in the presence of a proton gradient across the membrane. The catalytic sites are hosted primarily by the beta subunits. The protein is ATP synthase subunit beta 1 of Burkholderia mallei (strain SAVP1).